A 102-amino-acid polypeptide reads, in one-letter code: NADH-quinone oxidoreductase subunit K (102 aa).

3 consecutive transmembrane segments (helical) span residues 5 to 25 (LAHY…GIFL), 31 to 51 (IILL…FVAF), and 62 to 82 (VFVF…LAIL).

This sequence belongs to the complex I subunit 4L family. In terms of assembly, NDH-1 is composed of 14 different subunits. Subunits NuoA, H, J, K, L, M, N constitute the membrane sector of the complex.

The protein resides in the cell inner membrane. The enzyme catalyses a quinone + NADH + 5 H(+)(in) = a quinol + NAD(+) + 4 H(+)(out). Its function is as follows. NDH-1 shuttles electrons from NADH, via FMN and iron-sulfur (Fe-S) centers, to quinones in the respiratory chain. The immediate electron acceptor for the enzyme in this species is believed to be ubiquinone. Couples the redox reaction to proton translocation (for every two electrons transferred, four hydrogen ions are translocated across the cytoplasmic membrane), and thus conserves the redox energy in a proton gradient. The chain is NADH-quinone oxidoreductase subunit K from Bordetella parapertussis (strain 12822 / ATCC BAA-587 / NCTC 13253).